Consider the following 528-residue polypeptide: Probable rhamnogalacturonate lyase A (528 aa).

Residues 1–20 form the signal peptide; sequence MFFQTGLLLSLSLWTKVAYA. 2 disulfide bridges follow: C50–C93 and C184–C193. N56 carries N-linked (GlcNAc...) asparagine glycosylation. Residue N351 is glycosylated (N-linked (GlcNAc...) asparagine).

Belongs to the polysaccharide lyase 4 family.

It is found in the secreted. The catalysed reaction is Endotype eliminative cleavage of L-alpha-rhamnopyranosyl-(1-&gt;4)-alpha-D-galactopyranosyluronic acid bonds of rhamnogalacturonan I domains in ramified hairy regions of pectin leaving L-rhamnopyranose at the reducing end and 4-deoxy-4,5-unsaturated D-galactopyranosyluronic acid at the non-reducing end.. In terms of biological role, pectinolytic enzymes consist of four classes of enzymes: pectin lyase, polygalacturonase, pectin methylesterase and rhamnogalacturonase. Degrades the rhamnogalacturonan I (RG-I) backbone of pectin. Active against linseed rhamnogalacturonan. The chain is Probable rhamnogalacturonate lyase A (rglA) from Aspergillus clavatus (strain ATCC 1007 / CBS 513.65 / DSM 816 / NCTC 3887 / NRRL 1 / QM 1276 / 107).